The following is a 627-amino-acid chain: tRNA uridine 5-carboxymethylaminomethyl modification enzyme MnmG (627 aa).

FAD-binding positions include 16-21 (GAGHAG), Val-128, and Ser-183. Residue 275 to 289 (GPRYCPSIEDKVMRF) coordinates NAD(+). Gln-372 contributes to the FAD binding site.

It belongs to the MnmG family. As to quaternary structure, homodimer. Heterotetramer of two MnmE and two MnmG subunits. The cofactor is FAD.

Its subcellular location is the cytoplasm. Its function is as follows. NAD-binding protein involved in the addition of a carboxymethylaminomethyl (cmnm) group at the wobble position (U34) of certain tRNAs, forming tRNA-cmnm(5)s(2)U34. This is tRNA uridine 5-carboxymethylaminomethyl modification enzyme MnmG from Geobacter sulfurreducens (strain ATCC 51573 / DSM 12127 / PCA).